Consider the following 492-residue polypeptide: Solute carrier family 2, facilitated glucose transporter member 1 (492 aa).

The residue at position 1 (methionine 1) is an N-acetylmethionine. Residues 1 to 11 (MEPTSKKLTGR) are Cytoplasmic-facing. The chain crosses the membrane as a helical span at residues 12-33 (LMLAVGGAVLGSLQFGYNTGVI). Topologically, residues 34–66 (NAPQKVIEEFYNQTWVQRYGEPIPPATLTTLWS) are extracellular. An N-linked (GlcNAc...) asparagine glycan is attached at asparagine 45. A helical membrane pass occupies residues 67-87 (LSVAIFSVGGMIGSFSVGLFV). The Cytoplasmic portion of the chain corresponds to 88 to 90 (NRF). A helical transmembrane segment spans residues 91-112 (GRRNSMLMMNLLAFVSAVLMGF). At 113–120 (SKLGKSFE) the chain is on the extracellular side. The chain crosses the membrane as a helical span at residues 121–144 (MLILGRFIIGVYCGLTTGFVPMYV). The Cytoplasmic portion of the chain corresponds to 145 to 155 (GEVSPTELRGA). Residues 156–176 (LGTLHQLGIVVGILIAQVFGL) form a helical membrane-spanning segment. Residue glutamine 161 coordinates D-glucose. Residues 177 to 185 (DSIMGNQEL) lie on the Extracellular side of the membrane. A helical membrane pass occupies residues 186-206 (WPLLLSVIFIPALLQCILLPF). Topologically, residues 207–271 (CPESPRFLLI…LFRSAAYRQP (65 aa)) are cytoplasmic. Serine 226 is modified (phosphoserine). The helical transmembrane segment at 272–293 (ILIAVVLQLSQQLSGINAVFYY) threads the bilayer. D-glucose is bound by residues 282–283 (QQ) and asparagine 288. The Extracellular portion of the chain corresponds to 294 to 306 (STSIFEKAGVQQP). A helical membrane pass occupies residues 307–328 (VYATIGSGIVNTAFTVVSLFVV). Asparagine 317 is a D-glucose binding site. The Cytoplasmic portion of the chain corresponds to 329-334 (ERAGRR). The chain crosses the membrane as a helical span at residues 335-355 (TLHLIGLAGMAGCAVLMTIAL). Residues 356–365 (ALLERLPWMS) lie on the Extracellular side of the membrane. A helical membrane pass occupies residues 366–388 (YLSIVAIFGFVAFFEVGPGPIPW). D-glucose is bound by residues glutamate 380 and tryptophan 388. At 389 to 401 (FIVAELFSQGPRP) the chain is on the cytoplasmic side. The helical transmembrane segment at 402–422 (AAIAVAGFSNWTSNFIVGMCF) threads the bilayer. At 423-429 (QYVEQLC) the chain is on the extracellular side. Residues 430–450 (GPYVFIIFTVLLVLFFIFTYF) form a helical membrane-spanning segment. At 451-492 (KVPETKGRTFDEIASGFRQGGASQSDKTPEELFHPLGADSQV) the chain is on the cytoplasmic side. Serine 465 carries the post-translational modification Phosphoserine. The segment at 468-492 (RQGGASQSDKTPEELFHPLGADSQV) is disordered. The residue at position 478 (threonine 478) is a Phosphothreonine. Phosphoserine is present on serine 490.

It belongs to the major facilitator superfamily. Sugar transporter (TC 2.A.1.1) family. Glucose transporter subfamily. As to quaternary structure, found in a complex with ADD2, DMTN and SLC2A1. Interacts (via C-terminus cytoplasmic region) with DMTN. Interacts with SNX27; the interaction is required when endocytosed to prevent degradation in lysosomes and promote recycling to the plasma membrane. Interacts with GIPC (via PDZ domain). Interacts with STOM. Interacts with SGTA (via Gln-rich region). Interacts with BSG. Interacts with SMIM43; the interaction may promote SLC2A1-mediated glucose transport to meet the energy needs of mesendoderm differentiation. In terms of processing, phosphorylation at Ser-226 by PKC promotes glucose uptake by increasing cell membrane localization. Detected in brain capillary (at protein level). Detected in brain capillary.

The protein resides in the cell membrane. The protein localises to the photoreceptor inner segment. The enzyme catalyses D-glucose(out) = D-glucose(in). With respect to regulation, the uptake of glucose is inhibited by cytochalasin B. Glucose uptake is increased in response to phorbol ester 12-O-tetradecanoylphorbol-13-acetate (TPA) treatment: TPA-induced glucose uptake requires phosphorylation at Ser-226. Functionally, facilitative glucose transporter, which is responsible for constitutive or basal glucose uptake. Has a very broad substrate specificity; can transport a wide range of aldoses including both pentoses and hexoses. Most important energy carrier of the brain: present at the blood-brain barrier and assures the energy-independent, facilitative transport of glucose into the brain. In association with BSG and NXNL1, promotes retinal cone survival by increasing glucose uptake into photoreceptors. Required for mesendoderm differentiation. In Bos taurus (Bovine), this protein is Solute carrier family 2, facilitated glucose transporter member 1.